The chain runs to 136 residues: Large-conductance mechanosensitive channel (136 aa).

A run of 2 helical transmembrane segments spans residues 9-29 (AFAS…GAAF) and 79-99 (IQTV…LKAI).

It belongs to the MscL family. As to quaternary structure, homopentamer.

It is found in the cell inner membrane. Its function is as follows. Channel that opens in response to stretch forces in the membrane lipid bilayer. May participate in the regulation of osmotic pressure changes within the cell. The protein is Large-conductance mechanosensitive channel of Shewanella putrefaciens (strain CN-32 / ATCC BAA-453).